Consider the following 86-residue polypeptide: Small ribosomal subunit protein uS15 (86 aa).

The protein belongs to the universal ribosomal protein uS15 family. In terms of assembly, part of the 30S ribosomal subunit. Forms a bridge to the 50S subunit in the 70S ribosome, contacting the 23S rRNA.

In terms of biological role, one of the primary rRNA binding proteins, it binds directly to 16S rRNA where it helps nucleate assembly of the platform of the 30S subunit by binding and bridging several RNA helices of the 16S rRNA. Its function is as follows. Forms an intersubunit bridge (bridge B4) with the 23S rRNA of the 50S subunit in the ribosome. The chain is Small ribosomal subunit protein uS15 from Ruthia magnifica subsp. Calyptogena magnifica.